A 753-amino-acid polypeptide reads, in one-letter code: MDSLQTAQMVSLSAELGSNNLELAEPEEPGTSAAAGQSAAHPEEVTPEGSQALGAQEPEQSLPLAVPTPLECKVLLTQADALASEGHLREALEVYRQLSERQQLVAEQLEQLVRCLADSVPQEELASDSSGTSSCCAAALKEAGEAAAVAPEVWDGFKCKKCHGFLSDPVSLWCGHTFCKLCLERGRAADRRCALCGVKLSALMAASGRARGPRRAGQPAPLQLRVNVVLSGLLGKLFPGPARASQLRHEGNRLFREHQVEAALLKYNEAVRLAPNDHLLYSNRSQIYFTLESHEDALHDAEIACKLRPMGFKAHFRKAQALATLGKVKEALKEFLYCVSLDGKNKSARSEAQRENLELPHCSNQEGAAAAEESSSLANSAQGKVSSKEDRKKDQEGEDRDAASVRTGKCQEKKRNRCQIETQEDTELPNKVSKQDFPAEQGAKPDLSNPLGSFDASDLECSLCMRLFYEPVTTPCGHTFCLKCLERCLDHNAKCPLCKDVLLQCLPSRKYSKNVILEELIATFLPEEFKERKRLYEEEMEELSNLNKNVPIFVCTMAYPTVPCPLHIFEPCYRLMIRRCIETGTRQFGMCLGDPVKGFVEYGCILEIRNVQFFSDGRSVVDSIGKRRFKVLHQGQRDGYNTADIEYIEDQKVQGDDCAELMGLHNCVYEQASSWFHSLKASLKNRILNHFGPMPEKDEDPQVNPNGPAWCWWTLAVLPLESRAQLPFLAMRSLKDRLNGIRRILAFISRNQN.

A disordered region spans residues 17-57; the sequence is GSNNLELAEPEEPGTSAAAGQSAAHPEEVTPEGSQALGAQE. The TPR 1 repeat unit spans residues 72-105; sequence CKVLLTQADALASEGHLREALEVYRQLSERQQLV. The segment at 159 to 197 adopts an RING-type 1 zinc-finger fold; it reads CKKCHGFLSDPVSLWCGHTFCKLCLERGRAADRRCALCG. 3 TPR repeats span residues 244 to 277, 279 to 311, and 313 to 345; these read ASQL…APND, LLYS…RPMG, and KAHF…DGKN. The segment at 351 to 450 is disordered; sequence EAQRENLELP…QGAKPDLSNP (100 aa). Over residues 363–382 the composition is skewed to low complexity; that stretch reads SNQEGAAAAEESSSLANSAQ. Residues 386 to 413 are compositionally biased toward basic and acidic residues; that stretch reads SSKEDRKKDQEGEDRDAASVRTGKCQEK. An RING-type 2 zinc finger spans residues 461-499; that stretch reads CSLCMRLFYEPVTTPCGHTFCLKCLERCLDHNAKCPLCK. Residues 540–749 enclose the Lon N-terminal domain; it reads MEELSNLNKN…GIRRILAFIS (210 aa).

The sequence is that of LON peptidase N-terminal domain and RING finger protein 3 (Lonrf3) from Mus musculus (Mouse).